The sequence spans 338 residues: Biotin synthase (338 aa).

A Radical SAM core domain is found at 63-290 (NGVQLSTLLS…RAKVRLSAGR (228 aa)). The [4Fe-4S] cluster site is built by C78, C82, and C85. 4 residues coordinate [2Fe-2S] cluster: C122, C153, C213, and R285.

The protein belongs to the radical SAM superfamily. Biotin synthase family. As to quaternary structure, homodimer. Requires [4Fe-4S] cluster as cofactor. [2Fe-2S] cluster is required as a cofactor.

It catalyses the reaction (4R,5S)-dethiobiotin + (sulfur carrier)-SH + 2 reduced [2Fe-2S]-[ferredoxin] + 2 S-adenosyl-L-methionine = (sulfur carrier)-H + biotin + 2 5'-deoxyadenosine + 2 L-methionine + 2 oxidized [2Fe-2S]-[ferredoxin]. It functions in the pathway cofactor biosynthesis; biotin biosynthesis; biotin from 7,8-diaminononanoate: step 2/2. Catalyzes the conversion of dethiobiotin (DTB) to biotin by the insertion of a sulfur atom into dethiobiotin via a radical-based mechanism. The sequence is that of Biotin synthase from Nitrosomonas eutropha (strain DSM 101675 / C91 / Nm57).